Consider the following 436-residue polypeptide: Ribosomal protein uS12 methylthiotransferase RimO (436 aa).

Positions 2 to 117 (KNVGIISLGC…IAEVIEKIEK (116 aa)) constitute an MTTase N-terminal domain. Positions 11, 47, 80, 154, 158, and 161 each coordinate [4Fe-4S] cluster. The Radical SAM core domain maps to 140–369 (TTPNYYAYLK…MEIQKEISYQ (230 aa)). Residues 372 to 436 (LSKVGKQLEV…AYEYDLVGEY (65 aa)) form the TRAM domain.

It belongs to the methylthiotransferase family. RimO subfamily. [4Fe-4S] cluster is required as a cofactor.

The protein localises to the cytoplasm. It catalyses the reaction L-aspartate(89)-[ribosomal protein uS12]-hydrogen + (sulfur carrier)-SH + AH2 + 2 S-adenosyl-L-methionine = 3-methylsulfanyl-L-aspartate(89)-[ribosomal protein uS12]-hydrogen + (sulfur carrier)-H + 5'-deoxyadenosine + L-methionine + A + S-adenosyl-L-homocysteine + 2 H(+). Functionally, catalyzes the methylthiolation of an aspartic acid residue of ribosomal protein uS12. The sequence is that of Ribosomal protein uS12 methylthiotransferase RimO from Thermoanaerobacter sp. (strain X514).